A 339-amino-acid polypeptide reads, in one-letter code: Phenylalanine--tRNA ligase alpha subunit (339 aa).

A Mg(2+)-binding site is contributed by Glu254.

The protein belongs to the class-II aminoacyl-tRNA synthetase family. Phe-tRNA synthetase alpha subunit type 1 subfamily. Tetramer of two alpha and two beta subunits. Mg(2+) serves as cofactor.

The protein resides in the cytoplasm. It catalyses the reaction tRNA(Phe) + L-phenylalanine + ATP = L-phenylalanyl-tRNA(Phe) + AMP + diphosphate + H(+). This chain is Phenylalanine--tRNA ligase alpha subunit, found in Clostridium botulinum (strain ATCC 19397 / Type A).